Reading from the N-terminus, the 204-residue chain is UPF0228 protein MA_0511 (204 aa).

The protein belongs to the UPF0228 family.

The chain is UPF0228 protein MA_0511 from Methanosarcina acetivorans (strain ATCC 35395 / DSM 2834 / JCM 12185 / C2A).